We begin with the raw amino-acid sequence, 419 residues long: Farnesyl pyrophosphate synthase (419 aa).

N-acetylmethionine is present on M1. Isopentenyl diphosphate contacts are provided by K123, R126, and Q162. K123 is modified (N6-(2-hydroxyisobutyryl)lysine; alternate). An N6-acetyllysine; alternate modification is found at K123. The Mg(2+) site is built by D169 and D173. R178 provides a ligand contact to dimethylallyl diphosphate. R179 contacts isopentenyl diphosphate. 5 residues coordinate dimethylallyl diphosphate: K266, T267, Q306, K323, and K332. Position 353 is an N6-acetyllysine (K353).

This sequence belongs to the FPP/GGPP synthase family. Homodimer. Interacts with RSAD2. In terms of assembly, (Microbial infection) Interacts with HTLV-1 protein p13(II). The cofactor is Mg(2+).

It localises to the cytoplasm. It carries out the reaction isopentenyl diphosphate + dimethylallyl diphosphate = (2E)-geranyl diphosphate + diphosphate. It catalyses the reaction isopentenyl diphosphate + (2E)-geranyl diphosphate = (2E,6E)-farnesyl diphosphate + diphosphate. The protein operates within isoprenoid biosynthesis; farnesyl diphosphate biosynthesis; farnesyl diphosphate from geranyl diphosphate and isopentenyl diphosphate: step 1/1. Its pathway is isoprenoid biosynthesis; geranyl diphosphate biosynthesis; geranyl diphosphate from dimethylallyl diphosphate and isopentenyl diphosphate: step 1/1. Inactivated by interferon-induced RSAD2. This inactivation may result of disruption of lipid rafts at the plasma membrane, and thus have an antiviral effect since many enveloped viruses need lipid rafts to bud efficiently out of the cell. Key enzyme in isoprenoid biosynthesis which catalyzes the formation of farnesyl diphosphate (FPP), a precursor for several classes of essential metabolites including sterols, dolichols, carotenoids, and ubiquinones. FPP also serves as substrate for protein farnesylation and geranylgeranylation. Catalyzes the sequential condensation of isopentenyl pyrophosphate with the allylic pyrophosphates, dimethylallyl pyrophosphate, and then with the resultant geranylpyrophosphate to the ultimate product farnesyl pyrophosphate. This is Farnesyl pyrophosphate synthase from Homo sapiens (Human).